Reading from the N-terminus, the 497-residue chain is Serine/threonine protein phosphatase 2A 57 kDa regulatory subunit B' epsilon isoform (497 aa).

Positions 12 to 71 (KFNKSDQHHQDNNNNNNNTSTNTVVRGSRTTTPAPSSVSNGESQTTAQSPSQTPNHPMFT) are disordered. Positions 23–34 (NNNNNNNTSTNT) are enriched in low complexity. A compositionally biased stretch (polar residues) spans 35–71 (VVRGSRTTTPAPSSVSNGESQTTAQSPSQTPNHPMFT).

It belongs to the phosphatase 2A regulatory subunit B56 family. PP2A consists of a common heteromeric enzyme, composed of a catalytic subunit (subunits C), a constant regulatory subunit (subunit A), and a variety of regulatory subunits such as subunits B (the R2/B/PR55/B55, R3/B''/PR72/PR130/PR59 and R5/B'/B56 families). Expressed ubiquitously.

It localises to the cytoplasm. Functionally, the B regulatory subunit may modulate substrate selectivity and catalytic activity, and may also direct the localization of the catalytic enzyme to a particular subcellular compartment. This chain is Serine/threonine protein phosphatase 2A 57 kDa regulatory subunit B' epsilon isoform (B'EPSILON), found in Arabidopsis thaliana (Mouse-ear cress).